Here is a 1522-residue protein sequence, read N- to C-terminus: Sodium channel protein 1 brain (1522 aa).

Residues 1-50 (MDEKYTAKNRDKTFVVIEKRFKKNIIHRFSAKRSLFLFTPRNPIRRLAVC) lie on the Cytoplasmic side of the membrane. The stretch at 41-342 (RNPIRRLAVC…VATAYELEVK (302 aa)) is one I repeat. Residues 51-70 (IATNVCFDYFLMFTIMINCV) form a helical membrane-spanning segment. Residues 71–77 (FLAMPDI) lie on the Extracellular side of the membrane. The helical transmembrane segment at 78 to 99 (SEFAEYIFLGIYTMEMAIKLVA) threads the bilayer. Topologically, residues 100 to 112 (GGFFIDKYTYLRD) are cytoplasmic. A helical transmembrane segment spans residues 113 to 134 (AWNCLDFTVIMISYITLLLQTI). Topologically, residues 135–143 (NDKVISDIT) are extracellular. The chain crosses the membrane as a helical; Voltage-sensor span at residues 144-167 (GLRTFRVLRALRTLSIIPGLKTMV). The Cytoplasmic segment spans residues 168–179 (NALLRALRMLIS). The chain crosses the membrane as a helical span at residues 180–201 (VLILILFCLWIFSQAGVQLFGG). Over 202-278 (ALRHKCVLQI…PNYGYTNFDS (77 aa)) the chain is Extracellular. Cys207 and Cys255 are disulfide-bonded. Asn248 and Asn258 each carry an N-linked (GlcNAc...) asparagine glycan. The segment at residues 279-303 (IGWSMLISFQLLTQDYWEDVYNKVI) is an intramembrane region (pore-forming). Residues 304 to 308 (RAHSP) are Extracellular-facing. Residues 309-331 (WTVIYFIVINFFGSLYLMNLMLA) traverse the membrane as a helical segment. Residues 332 to 406 (VVATAYELEV…WLRVQSFAHC (75 aa)) lie on the Cytoplasmic side of the membrane. Residues 393–647 (CYNPWLRVQS…EQEVEVSSFA (255 aa)) form an II repeat. A helical transmembrane segment spans residues 407 to 426 (IITDSFTEVFIIFIIVLNTV). Residues 427-442 (FLAMEHHGMSMELKNV) lie on the Extracellular side of the membrane. A helical transmembrane segment spans residues 443 to 464 (LKVANYVFTTVFVLEAILKLLA). Residues 465–472 (FNKQYFKS) are Cytoplasmic-facing. A helical membrane pass occupies residues 473-491 (GWNICDLVVVVASLIDLGV). Residues 492–498 (EGLKGVS) lie on the Extracellular side of the membrane. A helical; Voltage-sensor membrane pass occupies residues 499 to 522 (VFRSFRLLRVFHLAQSWTTMRLLL). Over 523–531 (CIILNTLGS) the chain is Cytoplasmic. Residues 532–553 (LGYLTIILIIVIYIFAVTGLQL) form a helical membrane-spanning segment. Over 554 to 575 (FHTEYTPDKFRGEPVPRWNFND) the chain is Extracellular. An intramembrane region (pore-forming) is located at residues 576 to 596 (FLHSFMMVFRILCGEWIEPMY). Residues 597–607 (DCMRACNGLCF) lie on the Extracellular side of the membrane. Cys598 and Cys606 are joined by a disulfide. Residues 608–628 (LIFIPVTVFGKTLFFLFIGLV) form a helical membrane-spanning segment. Over 629–777 (LGAFGSDTVE…WNNFRRQLMM (149 aa)) the chain is Cytoplasmic. Residues 770 to 1074 (NFRRQLMMVC…QNYYNTLKKL (305 aa)) form an III repeat. The chain crosses the membrane as a helical span at residues 778-797 (VCENKYFETGVLVIIFASSI). Residues 798 to 815 (LLAFEDIYLNEKPRLKLA) are Extracellular-facing. Residues 816–837 (IFYLDITFCLLFFLEMVLKLVA) form a helical membrane-spanning segment. Over 838 to 846 (LGFVHYYTH) the chain is Cytoplasmic. A helical transmembrane segment spans residues 847–868 (FWTILDFTIVIITVISLAASGL). Topologically, residues 869-874 (GMEQIT) are extracellular. A helical; Voltage-sensor transmembrane segment spans residues 875-898 (AFRSLRTLRALRPLRAVSRWQGMK). Topologically, residues 899 to 915 (IIVNALMLSIPSIFNVL) are cytoplasmic. A helical membrane pass occupies residues 916–937 (LVCVVFWLIFAIMGVQLFAGKF). Over 938–976 (YKCVNETNMRIPPTEVANKIECYNKNYTWVNSNVNFDNV) the chain is Extracellular. N-linked (GlcNAc...) asparagine glycosylation is found at Asn942 and Asn963. The segment at residues 977–998 (GGAFLALFQVATFEGWMEIMAD) is an intramembrane region (pore-forming). Over 999–1009 (AVDVTEVDEQP) the chain is Extracellular. Residues 1010–1022 (KFEATVYYYFYFV) form a helical membrane-spanning segment. The Cytoplasmic segment spans residues 1023 to 1100 (LFIIFGSFFV…QAVVYDLVMS (78 aa)). Thr1076 bears the Phosphothreonine; by PKC mark. An IV repeat occupies 1083 to 1386 (VKRPKNKCQA…WEQYDPLATQ (304 aa)). The chain crosses the membrane as a helical span at residues 1101 to 1120 (NQFEIFITTIIITNMIFMAF). The Extracellular portion of the chain corresponds to 1121–1132 (EHYNQSEVVTEV). The N-linked (GlcNAc...) asparagine glycan is linked to Asn1124. A helical transmembrane segment spans residues 1133 to 1154 (LATANIAFTILYAVEAIIKIIG). Residues 1155–1162 (LRIHYLRN) are Cytoplasmic-facing. The chain crosses the membrane as a helical span at residues 1163 to 1184 (LWNVFDFLVVTLSVMDAFLNDI). Over 1185–1194 (FGDGIFMNPS) the chain is Extracellular. A helical; Voltage-sensor transmembrane segment spans residues 1195-1218 (LLRVARMFRIGRIIRLIKWAKGMR). Topologically, residues 1219–1236 (KLLFALVISLPALFNIGA) are cytoplasmic. Residues 1237–1258 (LLMLVMFIYTIIGMSSFGQIKL) form a helical membrane-spanning segment. Topologically, residues 1259–1270 (SGALNDQVNFQT) are extracellular. Residues 1271–1293 (FGKTFLLLVRLATSAGWNDILGP) constitute an intramembrane region (pore-forming). Over 1294–1323 (LLIQPPNCDPNYITTSTGEKIKVVNGDCGM) the chain is Extracellular. Residues 1324-1346 (PWLAISYMVSYIIIVFMIVFNMY) traverse the membrane as a helical segment. At 1347 to 1522 (IAVILENFNQ…FIISAPETAV (176 aa)) the chain is on the cytoplasmic side.

Belongs to the sodium channel (TC 1.A.1.10) family.

It localises to the cell membrane. Its function is as follows. Mediates the voltage-dependent sodium ion permeability of excitable membranes. Assuming opened or closed conformations in response to the voltage difference across the membrane, the protein forms a sodium-selective channel through which Na(+) ions may pass in accordance with their electrochemical gradient. This Heterololigo bleekeri (Spear squid) protein is Sodium channel protein 1 brain.